Reading from the N-terminus, the 247-residue chain is NCT transcriptional regulatory complex subunit A (247 aa).

Residues 1 to 12 (MTDQDSTYRPRS) show a composition bias toward basic and acidic residues. Disordered regions lie at residues 1-31 (MTDQ…SPIY), 48-82 (FFAP…SPDM), and 212-247 (VPDQ…DDSD). A compositionally biased stretch (polar residues) spans 13 to 22 (PDLSTFQSSI).

Belongs to the NC2 alpha/DRAP1 family. As to quaternary structure, forms the NCT transcriptional regulatory complex with nctB and mot1.

Its subcellular location is the nucleus. In terms of biological role, part of the NCT transcriptional regulatory complex that acts as a key regulator of ergosterol biosynthesis and the azole exporter cdr1B. The NCT complex binds the promoters of genes linked to azole susceptibility, and especially represses the expression of cdr1B transporter. The chain is NCT transcriptional regulatory complex subunit A from Aspergillus fumigatus (strain CBS 144.89 / FGSC A1163 / CEA10) (Neosartorya fumigata).